The primary structure comprises 652 residues: Phosphomethylpyrimidine synthase (652 aa).

Residues N235, M264, Y293, H329, 349-351 (SRG), 390-393 (DGMR), and E429 each bind substrate. H433 is a binding site for Zn(2+). A substrate-binding site is contributed by Y456. H497 is a Zn(2+) binding site. Positions 577, 580, and 585 each coordinate [4Fe-4S] cluster.

It belongs to the ThiC family. Homodimer. It depends on [4Fe-4S] cluster as a cofactor.

The enzyme catalyses 5-amino-1-(5-phospho-beta-D-ribosyl)imidazole + S-adenosyl-L-methionine = 4-amino-2-methyl-5-(phosphooxymethyl)pyrimidine + CO + 5'-deoxyadenosine + formate + L-methionine + 3 H(+). It participates in cofactor biosynthesis; thiamine diphosphate biosynthesis. Its function is as follows. Catalyzes the synthesis of the hydroxymethylpyrimidine phosphate (HMP-P) moiety of thiamine from aminoimidazole ribotide (AIR) in a radical S-adenosyl-L-methionine (SAM)-dependent reaction. The sequence is that of Phosphomethylpyrimidine synthase from Shewanella sediminis (strain HAW-EB3).